The sequence spans 188 residues: Elongation factor P (188 aa).

It belongs to the elongation factor P family.

The protein resides in the cytoplasm. The protein operates within protein biosynthesis; polypeptide chain elongation. Involved in peptide bond synthesis. Stimulates efficient translation and peptide-bond synthesis on native or reconstituted 70S ribosomes in vitro. Probably functions indirectly by altering the affinity of the ribosome for aminoacyl-tRNA, thus increasing their reactivity as acceptors for peptidyl transferase. The sequence is that of Elongation factor P from Caulobacter sp. (strain K31).